A 118-amino-acid chain; its full sequence is Small ribosomal subunit protein bS6 (118 aa).

A disordered region spans residues 98–118; the sequence is TAAPAAKVAPVETAPAAEAAE. Low complexity predominate over residues 99–118; sequence AAPAAKVAPVETAPAAEAAE.

Belongs to the bacterial ribosomal protein bS6 family.

In terms of biological role, binds together with bS18 to 16S ribosomal RNA. The polypeptide is Small ribosomal subunit protein bS6 (Geobacter metallireducens (strain ATCC 53774 / DSM 7210 / GS-15)).